Here is a 176-residue protein sequence, read N- to C-terminus: Ribosome rescue factor SmrB (176 aa).

One can recognise a Smr domain in the interval 93–168 (LDLHGYRQSE…GDAALLVLID (76 aa)).

The protein belongs to the SmrB family. In terms of assembly, associates with collided ribosomes, but not with correctly translating polysomes.

Its function is as follows. Acts as a ribosome collision sensor. Detects stalled/collided disomes (pairs of ribosomes where the leading ribosome is stalled and a second ribosome has collided with it) and endonucleolytically cleaves mRNA at the 5' boundary of the stalled ribosome. Stalled/collided disomes form a new interface (primarily via the 30S subunits) that binds SmrB. Cleaved mRNA becomes available for tmRNA ligation, leading to ribosomal subunit dissociation and rescue of stalled ribosomes. The sequence is that of Ribosome rescue factor SmrB from Shewanella baltica (strain OS155 / ATCC BAA-1091).